The chain runs to 78 residues: Chondrosarcoma-associated gene 1 protein (78 aa).

The signal sequence occupies residues 1 to 19 (MSATTACWPAFTVLGEARG). The segment at 35–78 (KMSRKPRASSPFSNNHPSTPKRFPRQPRREKGPVKEVPGTKGSP) is disordered.

Expressed in chondrosarcoma, melanoma, cartilage and testis, but not in other normal tissues.

It localises to the cytoplasm. The protein resides in the cytoskeleton. It is found in the microtubule organizing center. The protein localises to the centrosome. Its subcellular location is the spindle pole. Its function is as follows. May play an important role in maintaining centrosome integrity during mitosis. This chain is Chondrosarcoma-associated gene 1 protein, found in Homo sapiens (Human).